We begin with the raw amino-acid sequence, 357 residues long: Cholinesterase 1 (357 aa).

Residue Ser-112 is the Acyl-ester intermediate of the active site. Residues Cys-166 and Cys-179 are joined by a disulfide bond. Catalysis depends on charge relay system residues Glu-244 and His-357.

This sequence belongs to the type-B carboxylesterase/lipase family.

The enzyme catalyses an acylcholine + H2O = a carboxylate + choline + H(+). The polypeptide is Cholinesterase 1 (CHE1) (Branchiostoma lanceolatum (Common lancelet)).